Consider the following 878-residue polypeptide: Bifunctional heparan sulfate N-deacetylase/N-sulfotransferase 1 (878 aa).

The Cytoplasmic portion of the chain corresponds to 1-17 (MSLSLKTRRFGRPVRPQ). Residues 1-169 (MSLSLKTRRF…VEYGVGIIGF (169 aa)) are sufficient for localization to Golgi membrane. A helical; Signal-anchor for type II membrane protein membrane pass occupies residues 18 to 38 (LVLLLLFALCLLSVFISAYYL). The Lumenal portion of the chain corresponds to 39-878 (YGWKRGLEPS…WLREELQNTR (840 aa)). Residues 40 to 594 (GWKRGLEPSG…KRHKDIWSKE (555 aa)) are heparan sulfate N-deacetylase 1. N-linked (GlcNAc...) asparagine glycosylation is found at Asn-231, Asn-347, and Asn-397. Residues 595-878 (KTCDRFPKLL…WLREELQNTR (284 aa)) are heparan sulfate N-sulfotransferase 1. Lys-610 acts as the For sulfotransferase activity in catalysis. Residue 610–614 (KTGTT) coordinates adenosine 3',5'-bisphosphate. Asn-663 carries an N-linked (GlcNAc...) asparagine glycan. Adenosine 3',5'-bisphosphate-binding residues include Ser-708 and Trp-813. Cys-814 and Cys-824 form a disulfide bridge. 829 to 833 (KGRKY) serves as a coordination point for adenosine 3',5'-bisphosphate.

Belongs to the sulfotransferase 1 family. NDST subfamily. Monomer.

The protein localises to the golgi apparatus membrane. Its subcellular location is the golgi apparatus. The protein resides in the trans-Golgi network membrane. It carries out the reaction alpha-D-glucosaminyl-[heparan sulfate](n) + 3'-phosphoadenylyl sulfate = N-sulfo-alpha-D-glucosaminyl-[heparan sulfate](n) + adenosine 3',5'-bisphosphate + 2 H(+). The protein operates within glycan metabolism; heparan sulfate biosynthesis. It functions in the pathway glycan metabolism; heparin biosynthesis. Essential bifunctional enzyme that catalyzes both the N-deacetylation and the N-sulfation of glucosamine (GlcNAc) of the glycosaminoglycan in heparan sulfate. Modifies the GlcNAc-GlcA disaccharide repeating sugar backbone to make N-sulfated heparosan, a prerequisite substrate for later modifications in heparin biosynthesis. Plays a role in determining the extent and pattern of sulfation of heparan sulfate. The protein is Bifunctional heparan sulfate N-deacetylase/N-sulfotransferase 1 (ndst1) of Xenopus laevis (African clawed frog).